We begin with the raw amino-acid sequence, 373 residues long: Ras association domain-containing protein 7 (373 aa).

A Ras-associating domain is found at 6-89; the sequence is AAMELKVWVD…VQFVLRRTGP (84 aa). Residues 122-150 are disordered; sequence CEPRKTLTPEPAPSLSRPGPAAPVTPTPG. 2 coiled-coil regions span residues 175–227 and 248–297; these read WEQE…AAEA and QERQ…QFIQ. Residues 300-356 form a disordered region; it reads GAALPPPPRPDRGPPGTQGPLPPAREESLLGAPSESHAGAQPRPRGGPHDAELLEVA.

Interacts with MAP2K7 and GTP-bound NRAS. Post-translationally, polyubiquitinated and degraded by the proteasome upon prolonged stress stimuli.

It localises to the cytoplasm. The protein localises to the cytoskeleton. The protein resides in the microtubule organizing center. Its subcellular location is the centrosome. Negatively regulates stress-induced JNK activation and apoptosis by promoting MAP2K7 phosphorylation and inhibiting its ability to activate JNK. Following prolonged stress, anti-apoptotic effect stops because of degradation of RASSF7 protein via the ubiquitin-proteasome pathway. Required for the activation of AURKB and chromosomal congression during mitosis where it stimulates microtubule polymerization. The polypeptide is Ras association domain-containing protein 7 (RASSF7) (Homo sapiens (Human)).